We begin with the raw amino-acid sequence, 196 residues long: MFPSGLIERPANWVALAGFMGTGKSRIGWELSRALALHFVDTDKLITRVVGKSIPEVFAQEGEGYFRACEREVVQRVTRLDHAVISLGGGTFIHEENRRLLLSRGPVVVLWATPETVYQRTKHSDRPLLKVEDPLSRIRTLMNEREGVYRQGTIHVHSDGRPSEEIVEEVVERLWAWRDAQAAWAALPPDYDRATS.

ATP is bound at residue 21-26 (GTGKSR). Residue Ser-25 coordinates Mg(2+). Asp-43, Arg-67, and Gly-89 together coordinate substrate. ATP is bound at residue Arg-126. Position 145 (Arg-145) interacts with substrate. Residue Arg-161 participates in ATP binding.

The protein belongs to the shikimate kinase family. As to quaternary structure, monomer. Requires Mg(2+) as cofactor.

The protein localises to the cytoplasm. It catalyses the reaction shikimate + ATP = 3-phosphoshikimate + ADP + H(+). Its pathway is metabolic intermediate biosynthesis; chorismate biosynthesis; chorismate from D-erythrose 4-phosphate and phosphoenolpyruvate: step 5/7. Catalyzes the specific phosphorylation of the 3-hydroxyl group of shikimic acid using ATP as a cosubstrate. In Deinococcus radiodurans (strain ATCC 13939 / DSM 20539 / JCM 16871 / CCUG 27074 / LMG 4051 / NBRC 15346 / NCIMB 9279 / VKM B-1422 / R1), this protein is Shikimate kinase.